The primary structure comprises 369 residues: Deoxyhypusine synthase (369 aa).

Residues 105–109, 131–133, Glu-137, and Asp-238 each bind NAD(+); these read SNLIS and TAG. Residue 136-137 participates in spermidine binding; that stretch reads EE. Asp-243 lines the spermidine pocket. Gly-283 lines the NAD(+) pocket. His-288 contacts spermidine. Position 308–309 (308–309) interacts with NAD(+); it reads TA. Residues 314-316 and 323-329 each bind spermidine; these read GSD and EAVSWGK. The active-site Nucleophile is the Lys-329. 342–343 contacts NAD(+); that stretch reads DA.

It belongs to the deoxyhypusine synthase family. It depends on NAD(+) as a cofactor.

It catalyses the reaction [eIF5A protein]-L-lysine + spermidine = [eIF5A protein]-deoxyhypusine + propane-1,3-diamine. It functions in the pathway protein modification; eIF5A hypusination. Its function is as follows. Catalyzes the NAD-dependent oxidative cleavage of spermidine and the subsequent transfer of the butylamine moiety of spermidine to the epsilon-amino group of a critical lysine residue of the eIF-5A precursor protein to form the intermediate deoxyhypusine residue. This is the first step of the post-translational modification of that lysine into an unusual amino acid residue named hypusine. Hypusination is unique to mature eIF-5A factor and is essential for its function. The sequence is that of Deoxyhypusine synthase (Dhps) from Mus musculus (Mouse).